The sequence spans 548 residues: Peptidyl-prolyl isomerase CWC27 (548 aa).

Residues 11–193 (PTASVIIHTT…YPVKIERIEI (183 aa)) form the PPIase cyclophilin-type domain. Disordered stretches follow at residues 204–436 (RSRV…GDEE) and 504–548 (TLKD…RGAK). Basic and acidic residues-rich tracts occupy residues 328–340 (EAPRKTALERANE), 353–366 (IHSEEPVKEKKKSA), 406–428 (RLEKAPPEKENEPAARETTKDGE), and 504–516 (TLKDEKKAARDAR).

This sequence belongs to the cyclophilin-type PPIase family. CWC27 subfamily. In terms of assembly, associated with the spliceosome.

It is found in the cytoplasm. Its subcellular location is the nucleus. It carries out the reaction [protein]-peptidylproline (omega=180) = [protein]-peptidylproline (omega=0). In terms of biological role, PPIases accelerate the folding of proteins. It catalyzes the cis-trans isomerization of proline imidic peptide bonds in oligopeptides. Involved in pre-mRNA splicing. The protein is Peptidyl-prolyl isomerase CWC27 (CWC27) of Gibberella zeae (strain ATCC MYA-4620 / CBS 123657 / FGSC 9075 / NRRL 31084 / PH-1) (Wheat head blight fungus).